We begin with the raw amino-acid sequence, 522 residues long: Maturase K (522 aa).

The protein belongs to the intron maturase 2 family. MatK subfamily.

The protein resides in the plastid. It is found in the chloroplast. In terms of biological role, usually encoded in the trnK tRNA gene intron. Probably assists in splicing its own and other chloroplast group II introns. This is Maturase K from Iris danfordiae (Danford iris).